Consider the following 112-residue polypeptide: T cell receptor alpha variable 41 (112 aa).

The first 21 residues, 1–21 (MVKIRQFLLAILWLQLSCVSA), serve as a signal peptide directing secretion. The Ig-like domain maps to 24 to 112 (NEVEQSPQNL…DSAVYICAVR (89 aa)). N-linked (GlcNAc...) asparagine glycans are attached at residues Asn32 and Asn44. Cys45 and Cys109 are disulfide-bonded.

As to quaternary structure, alpha-beta TR is a heterodimer composed of an alpha and beta chain; disulfide-linked. The alpha-beta TR is associated with the transmembrane signaling CD3 coreceptor proteins to form the TR-CD3 (TcR or TCR). The assembly of alpha-beta TR heterodimers with CD3 occurs in the endoplasmic reticulum where a single alpha-beta TR heterodimer associates with one CD3D-CD3E heterodimer, one CD3G-CD3E heterodimer and one CD247 homodimer forming a stable octameric structure. CD3D-CD3E and CD3G-CD3E heterodimers preferentially associate with TR alpha and TR beta chains, respectively. The association of the CD247 homodimer is the last step of TcR assembly in the endoplasmic reticulum and is required for transport to the cell surface.

It localises to the cell membrane. Functionally, v region of the variable domain of T cell receptor (TR) alpha chain that participates in the antigen recognition. Alpha-beta T cell receptors are antigen specific receptors which are essential to the immune response and are present on the cell surface of T lymphocytes. Recognize peptide-major histocompatibility (MH) (pMH) complexes that are displayed by antigen presenting cells (APC), a prerequisite for efficient T cell adaptive immunity against pathogens. Binding of alpha-beta TR to pMH complex initiates TR-CD3 clustering on the cell surface and intracellular activation of LCK that phosphorylates the ITAM motifs of CD3G, CD3D, CD3E and CD247 enabling the recruitment of ZAP70. In turn ZAP70 phosphorylates LAT, which recruits numerous signaling molecules to form the LAT signalosome. The LAT signalosome propagates signal branching to three major signaling pathways, the calcium, the mitogen-activated protein kinase (MAPK) kinase and the nuclear factor NF-kappa-B (NF-kB) pathways, leading to the mobilization of transcription factors that are critical for gene expression and essential for T cell growth and differentiation. The T cell repertoire is generated in the thymus, by V-(D)-J rearrangement. This repertoire is then shaped by intrathymic selection events to generate a peripheral T cell pool of self-MH restricted, non-autoaggressive T cells. Post-thymic interaction of alpha-beta TR with the pMH complexes shapes TR structural and functional avidity. The protein is T cell receptor alpha variable 41 of Homo sapiens (Human).